Consider the following 82-residue polypeptide: UPF0248 protein Mevan_1298 (82 aa).

The protein belongs to the UPF0248 family.

In Methanococcus vannielii (strain ATCC 35089 / DSM 1224 / JCM 13029 / OCM 148 / SB), this protein is UPF0248 protein Mevan_1298.